Reading from the N-terminus, the 632-residue chain is Chaperone protein DnaK (632 aa).

A Phosphothreonine; by autocatalysis modification is found at threonine 198.

Belongs to the heat shock protein 70 family.

Functionally, acts as a chaperone. The protein is Chaperone protein DnaK of Rhodopseudomonas palustris (strain BisB18).